Reading from the N-terminus, the 477-residue chain is ATP synthase subunit beta (477 aa).

ATP is bound at residue 163-170 (GGAGVGKT).

It belongs to the ATPase alpha/beta chains family. In terms of assembly, F-type ATPases have 2 components, CF(1) - the catalytic core - and CF(0) - the membrane proton channel. CF(1) has five subunits: alpha(3), beta(3), gamma(1), delta(1), epsilon(1). CF(0) has four main subunits: a(1), b(1), b'(1) and c(9-12).

It is found in the cellular thylakoid membrane. It carries out the reaction ATP + H2O + 4 H(+)(in) = ADP + phosphate + 5 H(+)(out). Its function is as follows. Produces ATP from ADP in the presence of a proton gradient across the membrane. The catalytic sites are hosted primarily by the beta subunits. This is ATP synthase subunit beta from Synechococcus sp. (strain JA-2-3B'a(2-13)) (Cyanobacteria bacterium Yellowstone B-Prime).